Reading from the N-terminus, the 206-residue chain is ATP synthase subunit b (206 aa).

A helical membrane pass occupies residues 10–30 (LLKPFVSTAAICLLVAGTVVL).

Belongs to the ATPase B chain family. In terms of assembly, F-type ATPases have 2 components, F(1) - the catalytic core - and F(0) - the membrane proton channel. F(1) has five subunits: alpha(3), beta(3), gamma(1), delta(1), epsilon(1). F(0) has three main subunits: a(1), b(2) and c(10-14). The alpha and beta chains form an alternating ring which encloses part of the gamma chain. F(1) is attached to F(0) by a central stalk formed by the gamma and epsilon chains, while a peripheral stalk is formed by the delta and b chains.

Its subcellular location is the cell inner membrane. F(1)F(0) ATP synthase produces ATP from ADP in the presence of a proton or sodium gradient. F-type ATPases consist of two structural domains, F(1) containing the extramembraneous catalytic core and F(0) containing the membrane proton channel, linked together by a central stalk and a peripheral stalk. During catalysis, ATP synthesis in the catalytic domain of F(1) is coupled via a rotary mechanism of the central stalk subunits to proton translocation. Its function is as follows. Component of the F(0) channel, it forms part of the peripheral stalk, linking F(1) to F(0). This chain is ATP synthase subunit b, found in Geobacter sulfurreducens (strain ATCC 51573 / DSM 12127 / PCA).